A 67-amino-acid chain; its full sequence is MSRNLRTALIFGGFISLIGAAFYPIYFRPLMRLEEYKKEQAINRAGIVQEDVQPPGLKVWSDPFGRK.

At 1–6 (MSRNLR) the chain is on the mitochondrial matrix side. The chain crosses the membrane as a helical span at residues 7-27 (TALIFGGFISLIGAAFYPIYF). The Mitochondrial intermembrane segment spans residues 28–67 (RPLMRLEEYKKEQAINRAGIVQEDVQPPGLKVWSDPFGRK). A Phenylalanine amide modification is found at Phe64.

Component of the MITRAC (mitochondrial translation regulation assembly intermediate of cytochrome c oxidase complex) complex, the core components of this complex being COA3/MITRAC12 and COX14. Interacts with COA3/MITRAC12 and COX4I1. Directly interacts with newly synthesized MT-CO1/COX1. Expressed in the ovary, specifically in granulosa cells of follicles that have passed the primary stage and in oocytes (at protein level).

It localises to the mitochondrion inner membrane. Its subcellular location is the secreted. Component of the MITRAC (mitochondrial translation regulation assembly intermediate of cytochrome c oxidase complex) complex, that regulates cytochrome c oxidase assembly. Promotes the progression of complex assembly after the association of MT-CO1/COX1 with COX4I1 and COX6C. Chaperone-like assembly factor required to stabilize newly synthesized MT-CO1/COX1 and to prevent its premature turnover. Its function is as follows. Peptide involved in a broad spectrum of regulatory functions. Is a ligand for GPR173. As part of the reproductive cycle, it regulates gonadotropin-releasing hormone (GnRH) signaling in the hypothalamus and pituitary gland which augments the release of luteinizing hormone. Plays a protective role in memory retention through activation of GNRHR. Regulates the secretion of AVP by hypothalamic neurons. Plays a role in the transduction of the itch sensation. Induces anxiolytic effects, reducing behavior associated with anxiety. Regulates food intake as well as satiation and satiety. In the ovary, it regulates follicular growth by stimulating granulosa cell proliferation by increasing the expression of GPR173, CREB1, CYP19A1, KITLG, FSHR, and LHCGR. It also increases the production of estradiol (E2). In the heart, it regulates contractility and relaxation. It also plays a cardioprotective role during ischemia, where it activates the SAFE and RISK pathways. Stimulates the proliferation and differentiation of preadipocytes. In pancreatic islet cells, it induces proliferation of islet cells as well as the production of INS. In Homo sapiens (Human), this protein is Small integral membrane protein 20 (SMIM20).